Reading from the N-terminus, the 704-residue chain is Elongation factor G (704 aa).

The tr-type G domain occupies 6-282 (NKVRNIGIMA…AVIDYLPTPL (277 aa)). Residues 15–22 (AHIDAGKT), 79–83 (DTPGH), and 133–136 (NKMD) contribute to the GTP site.

It belongs to the TRAFAC class translation factor GTPase superfamily. Classic translation factor GTPase family. EF-G/EF-2 subfamily.

It is found in the cytoplasm. Catalyzes the GTP-dependent ribosomal translocation step during translation elongation. During this step, the ribosome changes from the pre-translocational (PRE) to the post-translocational (POST) state as the newly formed A-site-bound peptidyl-tRNA and P-site-bound deacylated tRNA move to the P and E sites, respectively. Catalyzes the coordinated movement of the two tRNA molecules, the mRNA and conformational changes in the ribosome. This is Elongation factor G from Corynebacterium diphtheriae (strain ATCC 700971 / NCTC 13129 / Biotype gravis).